The following is a 406-amino-acid chain: Succinylornithine transaminase (406 aa).

Lys-252 is subject to N6-(pyridoxal phosphate)lysine.

It belongs to the class-III pyridoxal-phosphate-dependent aminotransferase family. AstC subfamily. Pyridoxal 5'-phosphate is required as a cofactor.

It carries out the reaction N(2)-succinyl-L-ornithine + 2-oxoglutarate = N-succinyl-L-glutamate 5-semialdehyde + L-glutamate. It functions in the pathway amino-acid degradation; L-arginine degradation via AST pathway; L-glutamate and succinate from L-arginine: step 3/5. Its function is as follows. Catalyzes the transamination of N(2)-succinylornithine and alpha-ketoglutarate into N(2)-succinylglutamate semialdehyde and glutamate. Can also act as an acetylornithine aminotransferase. This chain is Succinylornithine transaminase, found in Escherichia coli O157:H7.